The following is an 85-amino-acid chain: Small ribosomal subunit protein bS16 (85 aa).

It belongs to the bacterial ribosomal protein bS16 family.

This is Small ribosomal subunit protein bS16 from Xanthomonas euvesicatoria pv. vesicatoria (strain 85-10) (Xanthomonas campestris pv. vesicatoria).